The sequence spans 537 residues: Chaperonin GroEL (537 aa).

ATP contacts are provided by residues 29-32 (TLGP), 86-90 (DGTTT), glycine 413, and aspartate 492.

The protein belongs to the chaperonin (HSP60) family. Forms a cylinder of 14 subunits composed of two heptameric rings stacked back-to-back. Interacts with the co-chaperonin GroES.

It is found in the cytoplasm. The catalysed reaction is ATP + H2O + a folded polypeptide = ADP + phosphate + an unfolded polypeptide.. Its function is as follows. Together with its co-chaperonin GroES, plays an essential role in assisting protein folding. The GroEL-GroES system forms a nano-cage that allows encapsulation of the non-native substrate proteins and provides a physical environment optimized to promote and accelerate protein folding. This is Chaperonin GroEL from Dehalococcoides mccartyi (strain ATCC BAA-2100 / JCM 16839 / KCTC 5957 / BAV1).